A 292-amino-acid polypeptide reads, in one-letter code: Small ribosomal subunit biogenesis GTPase RsgA (292 aa).

The CP-type G domain maps to 64–221 (RSELFRPAVA…LVDTPGFSSL (158 aa)). Residues 113 to 116 (NKMD) and 164 to 172 (GPSGVGKST) each bind GTP. The Zn(2+) site is built by cysteine 245, cysteine 250, histidine 252, and cysteine 258.

The protein belongs to the TRAFAC class YlqF/YawG GTPase family. RsgA subfamily. As to quaternary structure, monomer. Associates with 30S ribosomal subunit, binds 16S rRNA. Zn(2+) is required as a cofactor.

It is found in the cytoplasm. One of several proteins that assist in the late maturation steps of the functional core of the 30S ribosomal subunit. Helps release RbfA from mature subunits. May play a role in the assembly of ribosomal proteins into the subunit. Circularly permuted GTPase that catalyzes slow GTP hydrolysis, GTPase activity is stimulated by the 30S ribosomal subunit. This is Small ribosomal subunit biogenesis GTPase RsgA from Clostridium botulinum (strain Kyoto / Type A2).